Reading from the N-terminus, the 661-residue chain is PAN2-PAN3 deadenylation complex subunit PAN3 (661 aa).

2 disordered regions span residues 1-26 and 53-130; these read MASA…AREN and DPHK…LRQD. The segment at 26-55 adopts a C3H1-type zinc-finger fold; it reads NAKDTLCRNITIYGRCRYEDKGCAFNHDPH. A compositionally biased stretch (low complexity) spans 75–102; that stretch reads SFTPSLLSSNGSSPTSTPATTKKMTTIS. The span at 115-130 shows a compositional bias: polar residues; sequence SVVSRSNASTPGLRQD. The pseudokinase domain stretch occupies residues 263–524; it reads QTLPNTQLPA…NIDIFITGIS (262 aa). ATP is bound by residues arginine 315, 364–371, and 424–425; these read DYHPLSKT and SK. Residues 525–563 are a coiled coil; sequence SQLMSTFDSALHLDDQLTSDLSRELENGRLVRLMTKLNF. The interval 564-661 is knob domain; sequence VNERPEYEHD…ALMKPARRMH (98 aa).

Belongs to the protein kinase superfamily. PAN3 family. In terms of assembly, homodimer. Forms a heterotrimer with a catalytic subunit pan2 to form the poly(A)-nuclease (PAN) deadenylation complex. Interacts (via PAM-2 motif) with poly(A)-binding protein pab1 (via PABC domain), conferring substrate specificity of the enzyme complex.

The protein localises to the cytoplasm. Regulatory subunit of the poly(A)-nuclease (PAN) deadenylation complex, one of two cytoplasmic mRNA deadenylases involved in mRNA turnover. PAN specifically shortens poly(A) tails of RNA and the activity is stimulated by poly(A)-binding protein pab1. PAN deadenylation is followed by rapid degradation of the shortened mRNA tails by the CCR4-NOT complex. Deadenylated mRNAs are then degraded by two alternative mechanisms, namely exosome-mediated 3'-5' exonucleolytic degradation, or deadenylation-dependent mRNA decaping and subsequent 5'-3' exonucleolytic degradation by xrn1. May also be involved in post-transcriptional maturation of mRNA poly(A) tails. pan3 acts as a positive regulator for PAN activity, recruiting the catalytic subunit pan2 to mRNA via its interaction with RNA and with pab1. The polypeptide is PAN2-PAN3 deadenylation complex subunit PAN3 (Neosartorya fischeri (strain ATCC 1020 / DSM 3700 / CBS 544.65 / FGSC A1164 / JCM 1740 / NRRL 181 / WB 181) (Aspergillus fischerianus)).